Here is a 434-residue protein sequence, read N- to C-terminus: Meiosis-specific kinetochore protein (434 aa).

Disordered stretches follow at residues 1–102 (MDKI…PCET) and 249–289 (VFAE…PDNK). The span at 46-62 (KGKEQGLRKITEKKELS) shows a compositional bias: basic and acidic residues. Over residues 64–76 (LTGSSSQRPSLLS) the composition is skewed to polar residues. The POLO box domain (PBD)-binding motif lies at 334–336 (STP). A required for localization to kinetochores region spans residues 391 to 394 (EICC). The interval 404–424 (QMRRKDPAVKNRCSPPKDVPL) is disordered.

In terms of assembly, interacts with CENPC. Interacts with PLK1; required for recruitment of PLK1 at kinetochores. In terms of tissue distribution, germ cell-specific. Expressed in both testis and ovary. Not expressed in other tissues.

It is found in the chromosome. Its subcellular location is the centromere. It localises to the kinetochore. Functionally, key regulator of kinetochore function during meiosis I: required both for mono-orientation of kinetochores on sister chromosomes and protection of centromeric cohesin from separase-mediated cleavage. Acts by facilitating kinetochore mono-orientation during meiosis I, when kinetochores on sister chromosomes face the same direction and are thus captured and pulled by spindle fibers from the same pole. Also required to prevent cleavage of cohesin at centromeres during meiosis I, possibly by acting as a regulator of the shugoshin-dependent protection pathway. Acts in collaboration with PLK1: required for PLK1 enrichment to kinetochores. Not required during meiosis II or mitosis. The polypeptide is Meiosis-specific kinetochore protein (Mus musculus (Mouse)).